The primary structure comprises 1508 residues: Cellulose synthase operon protein C (1508 aa).

Positions 1–27 are cleaved as a signal peptide; the sequence is MRRNDLKPFYLAGMLELCLLAAPAAHA. TPR repeat units lie at residues 32–65, 119–152, 314–347, 354–389, 391–422, 423–456, 499–532, 692–725, 726–759, 761–793, and 794–827; these read TRQLVEQGNYWHDQGRDDLAADTWKKLLGIDPDQ, EDSNLRNARRAASAGRYVEAARSYEAAFAGKPPP, PEALGGLGSVRLRQQRFAEAQELLRPAAAGNGKW, ARYWQQLQQAETARARGDLAQARQLIEQAVQLLPNE, AGHVALGDLQAAGDPVAAEASYRKALARDADN, AGALQGLVGLYSRQGRLQEASALFDRLPAAERAK, AWIRLDLARLYQQAGRPDQARSVMDGLLAVHGDQ, SAYTLRQVDALRELGNLEGAYDALSPVLAQQPGN, RDAQAALARLYAAAGEHRQALAIYQQILQRQPSD, DTLTAAANSAAAQSDLRDAERYLQRALAQAPES, and PDVLAAAGRVYRSAGKNRKAEQYFRAALAAQQRQ.

The protein belongs to the AcsC/BcsC family.

It participates in glycan metabolism; bacterial cellulose biosynthesis. Required for maximal bacterial cellulose synthesis. This chain is Cellulose synthase operon protein C (bcsC), found in Xanthomonas axonopodis pv. citri (strain 306).